A 258-amino-acid polypeptide reads, in one-letter code: MLEQILATKREELDTLTLPEPLPEPKRRPFAAALRRPRRALGLIAEVKKASPSKGIIRPDFDPVAIAKAYERAGADAISVLTDERYFQGHRRYLQEVKEAVNIPVLRKDFIIDRRQVEESARLGADAILLIGEALSPEMLEALYQEAYSIGLECLVEVHAKETLERILARFTPEVVGINNRDLHTFVTTLEATKALASLIPPSSVIVSESGISSYRDVRTIRSYGVQAMLVGESLMRQADVERAVYRLFGEDDGNGSS.

It belongs to the TrpC family.

The enzyme catalyses 1-(2-carboxyphenylamino)-1-deoxy-D-ribulose 5-phosphate + H(+) = (1S,2R)-1-C-(indol-3-yl)glycerol 3-phosphate + CO2 + H2O. The protein operates within amino-acid biosynthesis; L-tryptophan biosynthesis; L-tryptophan from chorismate: step 4/5. This is Indole-3-glycerol phosphate synthase from Geobacillus thermodenitrificans (strain NG80-2).